Reading from the N-terminus, the 230-residue chain is Acyl-coenzyme A thioesterase THEM4 (230 aa).

A mitochondrion-targeting transit peptide spans M1–F27. Phosphoserine is present on residues S28 and S29. Residues K46 and K57 each carry the N6-succinyllysine modification. K65 carries the post-translational modification N6-acetyllysine. Residues K89 and K98 each carry the N6-succinyllysine modification. Residue D152 is the Proton donor/acceptor of the active site. Substrate-binding positions include K175 and R196–K197. K197 bears the N6-succinyllysine mark.

The protein belongs to the THEM4/THEM5 thioesterase family. Homodimer and homotetramer. Interacts with AKT1 in the cytosol. In terms of assembly, (Microbial infection) Interacts with V-AKT from AKT8 murine leukemia virus. Post-translationally, phosphorylated.

Its subcellular location is the cell membrane. The protein localises to the cell projection. It is found in the ruffle membrane. It localises to the cytoplasm. The protein resides in the mitochondrion. Its subcellular location is the mitochondrion inner membrane. The protein localises to the mitochondrion intermembrane space. The enzyme catalyses hexadecanoyl-CoA + H2O = hexadecanoate + CoA + H(+). The catalysed reaction is octanoyl-CoA + H2O = octanoate + CoA + H(+). It carries out the reaction decanoyl-CoA + H2O = decanoate + CoA + H(+). It catalyses the reaction dodecanoyl-CoA + H2O = dodecanoate + CoA + H(+). The enzyme catalyses tetradecanoyl-CoA + H2O = tetradecanoate + CoA + H(+). The catalysed reaction is (9Z)-octadecenoyl-CoA + H2O = (9Z)-octadecenoate + CoA + H(+). It carries out the reaction (5Z,8Z,11Z,14Z)-eicosatetraenoyl-CoA + H2O = (5Z,8Z,11Z,14Z)-eicosatetraenoate + CoA + H(+). Its function is as follows. Has acyl-CoA thioesterase activity towards medium and long-chain (C14 to C18) fatty acyl-CoA substrates, and probably plays a role in mitochondrial fatty acid metabolism. Plays a role in the apoptotic process, possibly via its regulation of AKT1 activity. The sequence is that of Acyl-coenzyme A thioesterase THEM4 (Them4) from Mus musculus (Mouse).